The primary structure comprises 87 residues: Neurotoxin Cex4 (87 aa).

Residues 1–19 (MNSLLMITACLFLIGTVWA) form the signal peptide. Residues 20 to 85 (KEGYLVNKST…TYPLPNKSCG (66 aa)) enclose the LCN-type CS-alpha/beta domain. Disulfide bonds link Cys-31-Cys-84, Cys-35-Cys-60, Cys-44-Cys-65, and Cys-48-Cys-67. Cys-84 carries the post-translational modification Cysteine amide. Positions 85 to 87 (GRK) are excised as a propeptide.

The protein belongs to the long (4 C-C) scorpion toxin superfamily. Sodium channel inhibitor family. Beta subfamily. As to expression, expressed by the venom gland.

It localises to the secreted. Beta toxins bind voltage-independently at site-4 of sodium channels (Nav) and shift the voltage of activation toward more negative potentials thereby affecting sodium channel activation and promoting spontaneous and repetitive firing. This is Neurotoxin Cex4 from Centruroides exilicauda (Bark scorpion).